The following is a 708-amino-acid chain: Exocyst complex component 5 (708 aa).

A2 carries the N-acetylalanine modification. Residues 40 to 101 are a coiled coil; it reads KRLLEEFVNH…AFQHFQELDE (62 aa). Phosphothreonine is present on residues T122, T395, and T405. A Phosphoserine modification is found at S412.

It belongs to the SEC10 family. The exocyst complex is composed of EXOC1, EXOC2, EXOC3, EXOC4, EXOC5, EXOC6, EXOC7 and EXOC8. Interacts with EXOC3L1.

Its subcellular location is the cytoplasm. It is found in the midbody. In terms of biological role, component of the exocyst complex involved in the docking of exocytic vesicles with fusion sites on the plasma membrane. In Mus musculus (Mouse), this protein is Exocyst complex component 5 (Exoc5).